The primary structure comprises 405 residues: Imidazolonepropionase (405 aa).

2 residues coordinate Fe(3+): His70 and His72. The Zn(2+) site is built by His70 and His72. 4-imidazolone-5-propanoate contacts are provided by Arg79, Tyr142, and His175. Tyr142 is a binding site for N-formimidoyl-L-glutamate. His240 contributes to the Fe(3+) binding site. His240 contacts Zn(2+). Gln243 lines the 4-imidazolone-5-propanoate pocket. Asp315 contributes to the Fe(3+) binding site. Asp315 provides a ligand contact to Zn(2+). Positions 317 and 319 each coordinate N-formimidoyl-L-glutamate. Residue Thr320 participates in 4-imidazolone-5-propanoate binding.

Belongs to the metallo-dependent hydrolases superfamily. HutI family. It depends on Zn(2+) as a cofactor. Fe(3+) serves as cofactor.

Its subcellular location is the cytoplasm. The catalysed reaction is 4-imidazolone-5-propanoate + H2O = N-formimidoyl-L-glutamate. It functions in the pathway amino-acid degradation; L-histidine degradation into L-glutamate; N-formimidoyl-L-glutamate from L-histidine: step 3/3. Functionally, catalyzes the hydrolytic cleavage of the carbon-nitrogen bond in imidazolone-5-propanoate to yield N-formimidoyl-L-glutamate. It is the third step in the universal histidine degradation pathway. This Ectopseudomonas mendocina (strain ymp) (Pseudomonas mendocina) protein is Imidazolonepropionase.